The primary structure comprises 1375 residues: uncharacterized protein (1375 aa).

The Helicase ATP-binding domain maps to 277-476 (LLASGDIRGG…FGLLFLLRYS (200 aa)). 290–297 (DEMGMGKT) provides a ligand contact to ATP. The segment at 1092–1130 (CIICRDIIKQGFITTCGHLYCSFCLEAWLKHSSSCPMCK) adopts an RING-type zinc-finger fold. In terms of domain architecture, Helicase C-terminal spans 1190 to 1336 (TISKHLLYLK…QLDKLGLDVP (147 aa)).

Belongs to the SNF2/RAD54 helicase family.

Its subcellular location is the nucleus. This is an uncharacterized protein from Schizosaccharomyces pombe (strain 972 / ATCC 24843) (Fission yeast).